Here is a 440-residue protein sequence, read N- to C-terminus: Xylose isomerase (440 aa).

Active-site residues include H101 and D104. Positions 232, 268, 271, 296, 307, 309, and 339 each coordinate Mg(2+).

The protein belongs to the xylose isomerase family. Homotetramer. Requires Mg(2+) as cofactor.

Its subcellular location is the cytoplasm. The catalysed reaction is alpha-D-xylose = alpha-D-xylulofuranose. This chain is Xylose isomerase, found in Salmonella agona (strain SL483).